We begin with the raw amino-acid sequence, 86 residues long: MAQGQSLQDIFLNVLRRERIQVSIYLFNGIKLQGHIESFDQFVIVLKNTISQMVYKHAVSTIVPSKFVSHYANNSSNYSNHSGDRN.

One can recognise a Sm domain in the interval 9-68 (DIFLNVLRRERIQVSIYLFNGIKLQGHIESFDQFVIVLKNTISQMVYKHAVSTIVPSKFV).

The protein belongs to the Hfq family. In terms of assembly, homohexamer.

RNA chaperone that binds small regulatory RNA (sRNAs) and mRNAs to facilitate mRNA translational regulation in response to envelope stress, environmental stress and changes in metabolite concentrations. Also binds with high specificity to tRNAs. The polypeptide is RNA-binding protein Hfq (Baumannia cicadellinicola subsp. Homalodisca coagulata).